The primary structure comprises 184 residues: MESFSSKSLVLQAEKKLLSKMAGRSVAHLFADETSSEVLDELYRVSKEYTRSRPQAQRVIKDLIKVAVKVAVLHRSGCFNPSELALATRFRQKLRQGAMTALSFGEVDFTFEAAVLASLLTECRDVLLELVERHLTPKSHGRIRHVFDHFSDAGLLTALYGPDYTQHLGKICGGLRKLLDEGKL.

Position 3 is a phosphoserine (Ser3).

This sequence belongs to the TNFAIP8 family. TNFAIP8L2 subfamily. In terms of assembly, may interact with CASP8; however, such result is unclear since could not reproduce the interaction with CASP8. Interacts with RAC1. In terms of processing, phosphorylated by TAK1/MAP3K7; this phosphorylation triggers association with BTRC and subsequent ubiquitination and degradation. Post-translationally, ubiquitinated in a BTRC-depdent manner; leading to degradation mediated through the proteasome pathway.

The protein localises to the cytoplasm. It is found in the nucleus. Its subcellular location is the lysosome. Functionally, acts as a negative regulator of innate and adaptive immunity by maintaining immune homeostasis. Plays a regulatory role in the Toll-like signaling pathway by determining the strength of LPS-induced signaling and gene expression. Inhibits TCR-mediated T-cell activation and negatively regulate T-cell function to prevent hyperresponsiveness. Also inhibits autolysosome formation via negatively modulating MTOR activation by interacting with RAC1 and promoting the disassociation of the RAC1-MTOR complex. Plays an essential role in NK-cell biology by acting as a checkpoint and displaying an expression pattern correlating with NK-cell maturation process and by negatively regulating NK-cell maturation and antitumor immunity. Mechanistically, suppresses IL-15-triggered mTOR activity in NK-cells. The sequence is that of Tumor necrosis factor alpha-induced protein 8-like protein 2 (TNFAIP8L2) from Bos taurus (Bovine).